Reading from the N-terminus, the 168-residue chain is Photosystem I assembly protein Ycf3 (168 aa).

TPR repeat units lie at residues 35–68 (AFTY…EIDP), 72–105 (SYIL…NPFL), and 120–153 (GEQA…TPGN).

It belongs to the Ycf3 family.

It localises to the plastid. The protein resides in the chloroplast thylakoid membrane. Functionally, essential for the assembly of the photosystem I (PSI) complex. May act as a chaperone-like factor to guide the assembly of the PSI subunits. This Daucus carota (Wild carrot) protein is Photosystem I assembly protein Ycf3.